The primary structure comprises 1256 residues: Putative protein DDB_G0292252 (1256 aa).

Disordered regions lie at residues 1–53 (MSDD…NNNN), 145–243 (LLNG…SISR), 898–951 (EQQQ…PVET), and 1069–1136 (SHPT…ATIS). Low complexity predominate over residues 147 to 214 (NGNNSNNNSN…NGNNINTSNG (68 aa)). Polar residues predominate over residues 222-243 (QTESTEQDFTSTSQNSTPSISR). 2 stretches are compositionally biased toward low complexity: residues 898 to 916 (EQQQQQQQQQSNLNNSNNE) and 925 to 942 (TTAATTTTTTTTTTTTTT). The segment covering 1069–1079 (SHPTIQSTSSP) has biased composition (polar residues). A compositionally biased stretch (low complexity) spans 1080–1136 (STSSSNNNNSTTTATNNNGNNGNNNNGNGNNNNNNNNNNNNNNNNNNNNNNGPATIS).

The chain is Putative protein DDB_G0292252 from Dictyostelium discoideum (Social amoeba).